Here is a 359-residue protein sequence, read N- to C-terminus: MAP kinase-activated protein kinase 2 (359 aa).

In terms of domain architecture, Protein kinase spans 20–281; that stretch reads VTSNTVLGYG…IQDVISNKWI (262 aa). ATP-binding positions include 26 to 34 and Lys49; that span reads LGYGINGKV. The active-site Proton acceptor is Asp142.

Belongs to the protein kinase superfamily. CAMK Ser/Thr protein kinase family. Post-translationally, phosphorylated and activated by MAP kinase.

The catalysed reaction is L-seryl-[protein] + ATP = O-phospho-L-seryl-[protein] + ADP + H(+). It carries out the reaction L-threonyl-[protein] + ATP = O-phospho-L-threonyl-[protein] + ADP + H(+). Its function is as follows. Its physiological substrate seems to be the small heat shock protein (HSP27/HSP25). The polypeptide is MAP kinase-activated protein kinase 2 (MAPk-Ak2) (Drosophila melanogaster (Fruit fly)).